Consider the following 381-residue polypeptide: MKYELQTTDGRARRGRLIFERGVVETPAFMPVGTYGTVKGMTPEEVKETGAQILLGNTFHLWLRPGQEIMKLHGDLHDFMNWHGPILTDSGGFQVFSLGDIRKITEQGVHFRNPINGDSIFLSPEKSMEIQNDLGSDIVMIFDECTPYPADWDYAKRSMEMSLRWAKRSRQRFDELENKNALFGIIQGSVYEDLRDVSVKGLVDIGFDGYAVGGLAVGEPKEDMHRILEHVCPQIPEDKPRYLMGVGKPEDLVEGVRRGVDMFDCVMPTRNARNGHLFVTDGVVKIRNAKHKDDVSSLDEHCDCYTCRNYSRAYLHHLDRCNEILGARLNTIHNLRYYQRLMAGLRQAIEEGKLELFVVDFYQRIGKPIPPLAEKDVAASN.

Asp89 serves as the catalytic Proton acceptor. Substrate is bound by residues 89 to 93 (DSGGF), Asp143, Gln187, and Gly214. The interval 245–251 (GVGKPED) is RNA binding. Asp264 (nucleophile) is an active-site residue. Residues 269–273 (TRNAR) form an RNA binding; important for wobble base 34 recognition region. Zn(2+)-binding residues include Cys302, Cys304, Cys307, and His333.

Belongs to the queuine tRNA-ribosyltransferase family. Homodimer. Within each dimer, one monomer is responsible for RNA recognition and catalysis, while the other monomer binds to the replacement base PreQ1. Zn(2+) serves as cofactor.

It carries out the reaction 7-aminomethyl-7-carbaguanine + guanosine(34) in tRNA = 7-aminomethyl-7-carbaguanosine(34) in tRNA + guanine. Its pathway is tRNA modification; tRNA-queuosine biosynthesis. In terms of biological role, catalyzes the base-exchange of a guanine (G) residue with the queuine precursor 7-aminomethyl-7-deazaguanine (PreQ1) at position 34 (anticodon wobble position) in tRNAs with GU(N) anticodons (tRNA-Asp, -Asn, -His and -Tyr). Catalysis occurs through a double-displacement mechanism. The nucleophile active site attacks the C1' of nucleotide 34 to detach the guanine base from the RNA, forming a covalent enzyme-RNA intermediate. The proton acceptor active site deprotonates the incoming PreQ1, allowing a nucleophilic attack on the C1' of the ribose to form the product. After dissociation, two additional enzymatic reactions on the tRNA convert PreQ1 to queuine (Q), resulting in the hypermodified nucleoside queuosine (7-(((4,5-cis-dihydroxy-2-cyclopenten-1-yl)amino)methyl)-7-deazaguanosine). The sequence is that of Queuine tRNA-ribosyltransferase from Pectobacterium atrosepticum (strain SCRI 1043 / ATCC BAA-672) (Erwinia carotovora subsp. atroseptica).